Here is a 358-residue protein sequence, read N- to C-terminus: Cilia- and flagella-associated protein 263 (358 aa).

Coiled-coil stretches lie at residues 93-138, 176-200, and 266-343; these read YKKM…FKRN, RKNSALLTHKKKQQAQLRQQEEMAE, and RTKL…YTKS.

This sequence belongs to the CFAP263 family. Forms a complex with CFAP184; the interaction is required for functional activity in cilia. Interacts with HAP1 and PCM1.

The protein localises to the cytoplasm. Its subcellular location is the cytoskeleton. It localises to the microtubule organizing center. The protein resides in the centrosome. It is found in the centriolar satellite. The protein localises to the cell projection. Its subcellular location is the cilium. Component of centriolar satellites contributing to primary cilium formation. In complex with CFAP263, acts as a regulator of ciliary beating that connects radial spoke 3 (RS3) to the inner dynein arm (IDA) and the nexin-dynein regulatory complex (N-DRC). The complex is positioned parallel to N-DRC and forms a connection between the arch at the base of RS3, the IDA tail and N-DRC. This Danio rerio (Zebrafish) protein is Cilia- and flagella-associated protein 263 (cfap263).